The chain runs to 206 residues: FMN-dependent NADH:quinone oxidoreductase 2 (206 aa).

FMN contacts are provided by residues S10, S16–S18, and S140–G143.

It belongs to the azoreductase type 1 family. In terms of assembly, homodimer. The cofactor is FMN.

It catalyses the reaction 2 a quinone + NADH + H(+) = 2 a 1,4-benzosemiquinone + NAD(+). The enzyme catalyses N,N-dimethyl-1,4-phenylenediamine + anthranilate + 2 NAD(+) = 2-(4-dimethylaminophenyl)diazenylbenzoate + 2 NADH + 2 H(+). Quinone reductase that provides resistance to thiol-specific stress caused by electrophilic quinones. Functionally, also exhibits azoreductase activity. Catalyzes the reductive cleavage of the azo bond in aromatic azo compounds to the corresponding amines. In Cupriavidus pinatubonensis (strain JMP 134 / LMG 1197) (Cupriavidus necator (strain JMP 134)), this protein is FMN-dependent NADH:quinone oxidoreductase 2.